Reading from the N-terminus, the 196-residue chain is Heat shock protein beta-8 (196 aa).

The interval 1-28 (MADGQLPFPCSYPSRLRRDPFRDSPLSS) is disordered. A phosphoserine mark is found at S24 and S57. At T63 the chain carries Phosphothreonine. Asymmetric dimethylarginine occurs at positions 71 and 78. The 108-residue stretch at 78–185 (RFGVPAEGRS…PFGESSFNNE (108 aa)) folds into the sHSP domain. Residue S87 is modified to Phosphoserine. Positions 176–196 (PFGESSFNNELPQDNQEVTCS) are disordered. The span at 178–196 (GESSFNNELPQDNQEVTCS) shows a compositional bias: polar residues.

Belongs to the small heat shock protein (HSP20) family. As to quaternary structure, monomer. Forms a ternary complex with BAG3 and HSPA1A. Component of the chaperone-assisted selective autophagy (CASA) complex consisting of BAG3, HSPA8/HSC70, HSPB8 and STUB1/CHIP. Interacts with HSPB1. Interacts with DNAJB6. Interacts with BAG3. In terms of tissue distribution, highly expressed in skeletal muscle, heart, uterus, liver, lung and ovary. Low levels found in stomach and brain. Not detected in small intestine, large intestine, kidney, spleen and testis. In the ovary, expression is concentrated in the endometrium and in the connective tissue between the circular and longitudinal muscles of the myometrium.

The protein resides in the cytoplasm. It is found in the nucleus. In terms of biological role, involved in the chaperone-assisted selective autophagy (CASA), a crucial process for protein quality control, particularly in mechanical strained cells and tissues such as muscle. Displays temperature-dependent chaperone activity. The polypeptide is Heat shock protein beta-8 (Hspb8) (Mus musculus (Mouse)).